Here is a 102-residue protein sequence, read N- to C-terminus: Small ribosomal subunit protein uS10 (102 aa).

The protein belongs to the universal ribosomal protein uS10 family. As to quaternary structure, part of the 30S ribosomal subunit.

In terms of biological role, involved in the binding of tRNA to the ribosomes. This chain is Small ribosomal subunit protein uS10, found in Bartonella henselae (strain ATCC 49882 / DSM 28221 / CCUG 30454 / Houston 1) (Rochalimaea henselae).